The chain runs to 364 residues: MRLLGKLRASAASSAPLEPAFSNVLTPNRIPEFFIPPRLPTPYAPESSPPAAALPRRCAAEPDLWLRGADDGAGRTDWDPRSQAALSLPHLPRALTAYGFCALLESPHTRRKESLFLGSPSSAALPPAPRPRAHTYGGGGGDAPLAPGARSPIATPAARGGPSPSLDTLAPPPRCRRLLRAPEGLLRRALRAGRSRGLARARSVSSGDGEDDDEDESRASPGSPTQAPVTSLSPHRDPRPERLEAEGTVTLGRAGGALRLAAEYNRASGRLRVRLLRAEGPAGGAAEPRAPVGCRISFVLKPRGAVVRRSRRAVLEQDLCLDGLSEDEVRRLAVRVKAENRGRGLERGRLLGQGELLLGPLLLL.

2 disordered regions span residues 118 to 175 (GSPS…PPRC) and 192 to 242 (AGRS…RPER). The span at 220–233 (SPGSPTQAPVTSLS) shows a compositional bias: polar residues. Positions 254 to 364 (AGGALRLAAE…ELLLGPLLLL (111 aa)) constitute a C2 domain.

It belongs to the C2CD4 family.

The protein resides in the nucleus. In terms of biological role, may be involved in inflammatory process. May regulate cell architecture and adhesion. This Bos taurus (Bovine) protein is C2 calcium-dependent domain-containing protein 4A (C2CD4A).